Here is a 226-residue protein sequence, read N- to C-terminus: Leucyl/phenylalanyl-tRNA--protein transferase (226 aa).

It belongs to the L/F-transferase family.

The protein resides in the cytoplasm. It catalyses the reaction N-terminal L-lysyl-[protein] + L-leucyl-tRNA(Leu) = N-terminal L-leucyl-L-lysyl-[protein] + tRNA(Leu) + H(+). It carries out the reaction N-terminal L-arginyl-[protein] + L-leucyl-tRNA(Leu) = N-terminal L-leucyl-L-arginyl-[protein] + tRNA(Leu) + H(+). The enzyme catalyses L-phenylalanyl-tRNA(Phe) + an N-terminal L-alpha-aminoacyl-[protein] = an N-terminal L-phenylalanyl-L-alpha-aminoacyl-[protein] + tRNA(Phe). Functions in the N-end rule pathway of protein degradation where it conjugates Leu, Phe and, less efficiently, Met from aminoacyl-tRNAs to the N-termini of proteins containing an N-terminal arginine or lysine. This is Leucyl/phenylalanyl-tRNA--protein transferase from Pseudomonas paraeruginosa (strain DSM 24068 / PA7) (Pseudomonas aeruginosa (strain PA7)).